We begin with the raw amino-acid sequence, 121 residues long: Cell division protein FtsB (121 aa).

The Cytoplasmic portion of the chain corresponds to 1 to 6 (MRNWRW). A helical transmembrane segment spans residues 7–24 (LLLVLAVLLAWLQYRFWF). Over 25 to 121 (GPGNSGEVMM…AASADPVDHP (97 aa)) the chain is Periplasmic. The stretch at 31–66 (EVMMLEAQVAHQTRDNEGLRQRNQALAAEVKDLKDG) forms a coiled coil. The interval 98 to 121 (PPAAQEAAPPAQPPAASADPVDHP) is disordered.

It belongs to the FtsB family. Part of a complex composed of FtsB, FtsL and FtsQ.

The protein localises to the cell inner membrane. Functionally, essential cell division protein. May link together the upstream cell division proteins, which are predominantly cytoplasmic, with the downstream cell division proteins, which are predominantly periplasmic. The protein is Cell division protein FtsB of Xanthomonas campestris pv. campestris (strain 8004).